A 189-amino-acid chain; its full sequence is Dynactin subunit 6 (189 aa).

The protein belongs to the dynactin subunits 5/6 family. Dynactin subunit 6 subfamily. Subunit of dynactin, a multiprotein complex part of a tripartite complex with dynein and a adapter, such as BICDL1, BICD2 or HOOK3. The dynactin complex is built around ACTR1A/ACTB filament and consists of an actin-related filament composed of a shoulder domain, a pointed end and a barbed end.

The protein localises to the cytoplasm. It localises to the cytoskeleton. In terms of biological role, part of the dynactin complex that activates the molecular motor dynein for ultra-processive transport along microtubules. The sequence is that of Dynactin subunit 6 (dynF) from Dictyostelium discoideum (Social amoeba).